A 306-amino-acid chain; its full sequence is Ornithine carbamoyltransferase (306 aa).

Residues 51 to 54 (STRT), Gln-78, Arg-102, and 129 to 132 (HPVQ) contribute to the carbamoyl phosphate site. L-ornithine is bound by residues Asn-159, Asp-223, and 227-228 (SM). Residues 263–264 (CL) and Arg-291 contribute to the carbamoyl phosphate site.

It belongs to the aspartate/ornithine carbamoyltransferase superfamily. OTCase family.

The protein resides in the cytoplasm. It catalyses the reaction carbamoyl phosphate + L-ornithine = L-citrulline + phosphate + H(+). It functions in the pathway amino-acid biosynthesis; L-arginine biosynthesis; L-arginine from L-ornithine and carbamoyl phosphate: step 1/3. Functionally, reversibly catalyzes the transfer of the carbamoyl group from carbamoyl phosphate (CP) to the N(epsilon) atom of ornithine (ORN) to produce L-citrulline. This Sulfurovum sp. (strain NBC37-1) protein is Ornithine carbamoyltransferase.